The sequence spans 406 residues: Phosphorylase b kinase gamma catalytic chain, liver/testis isoform (406 aa).

The Protein kinase domain occupies Tyr24–Phe291. ATP contacts are provided by residues Ile30 to Val38 and Lys53. The active-site Proton acceptor is Asp153. The segment at Gln306–Pro330 is calmodulin-binding (domain-N). Phosphoserine is present on Ser345. The segment at Val346–Arg370 is calmodulin-binding (domain-C).

Belongs to the protein kinase superfamily. CAMK Ser/Thr protein kinase family. Hexadecamer of 4 heterotetramers, each composed of alpha, beta, gamma, and delta subunits. Alpha (PHKA1 or PHKA2) and beta (PHKB) are regulatory subunits, gamma (PHKG1 or PHKG2) is the catalytic subunit, and delta is calmodulin.

The catalysed reaction is 2 ATP + phosphorylase b = 2 ADP + phosphorylase a.. In terms of biological role, catalytic subunit of the phosphorylase b kinase (PHK), which mediates the neural and hormonal regulation of glycogen breakdown (glycogenolysis) by phosphorylating and thereby activating glycogen phosphorylase. May regulate glycogeneolysis in the testis. In vitro, phosphorylates PYGM. This is Phosphorylase b kinase gamma catalytic chain, liver/testis isoform (PHKG2) from Homo sapiens (Human).